Here is a 326-residue protein sequence, read N- to C-terminus: F-box/LRR-repeat protein 12 (326 aa).

The F-box domain maps to 1 to 47 (MATLVELPDSVLLEIFSYLPVRDRIRISRVCHRWKRLVDDRWLWRHV). LRR repeat units lie at residues 51–78 (LYTM…RMGG), 86–111 (APQL…CLHV), 113–133 (DLSM…ELHS), 161–185 (VPAF…VLGG), 186–211 (TYRV…EVLG), 212–236 (CTLS…IRLT), 237–261 (VRGL…CLQG), and 266–291 (PEMP…ELQG).

Interacts with SKP1 and CUL1.

Its pathway is protein modification; protein ubiquitination. Substrate-recognition component of the SCF (SKP1-CUL1-F-box protein)-type E3 ubiquitin ligase complex. Mediates the polyubiquitination and proteasomal degradation of CAMK1 leading to disruption of cyclin D1/CDK4 complex assembly which results in G1 cell cycle arrest in lung epithelia. The polypeptide is F-box/LRR-repeat protein 12 (FBXL12) (Homo sapiens (Human)).